Reading from the N-terminus, the 547-residue chain is Chaperonin GroEL (547 aa).

ATP contacts are provided by residues 30–33 (TLGP), Lys-51, 87–91 (DGTTT), Gly-415, 480–482 (NAA), and Asp-496.

Belongs to the chaperonin (HSP60) family. Forms a cylinder of 14 subunits composed of two heptameric rings stacked back-to-back. Interacts with the co-chaperonin GroES.

The protein resides in the cytoplasm. It carries out the reaction ATP + H2O + a folded polypeptide = ADP + phosphate + an unfolded polypeptide.. Functionally, together with its co-chaperonin GroES, plays an essential role in assisting protein folding. The GroEL-GroES system forms a nano-cage that allows encapsulation of the non-native substrate proteins and provides a physical environment optimized to promote and accelerate protein folding. The chain is Chaperonin GroEL from Glaesserella parasuis serovar 5 (strain SH0165) (Haemophilus parasuis).